A 379-amino-acid polypeptide reads, in one-letter code: Succinate--CoA ligase [ADP-forming] subunit beta (379 aa).

The region spanning 9–236 (KEIARKYGIE…GRDATPYEKV (228 aa)) is the ATP-grasp domain. ATP contacts are provided by residues lysine 46, 53–55 (GRG), glutamate 92, valine 95, and glutamate 100. Residues asparagine 192 and aspartate 206 each contribute to the Mg(2+) site. Residues asparagine 256 and 313–315 (GIT) contribute to the substrate site.

This sequence belongs to the succinate/malate CoA ligase beta subunit family. Heterotetramer of two alpha and two beta subunits. It depends on Mg(2+) as a cofactor.

The catalysed reaction is succinate + ATP + CoA = succinyl-CoA + ADP + phosphate. The enzyme catalyses GTP + succinate + CoA = succinyl-CoA + GDP + phosphate. Its pathway is carbohydrate metabolism; tricarboxylic acid cycle; succinate from succinyl-CoA (ligase route): step 1/1. Functionally, succinyl-CoA synthetase functions in the citric acid cycle (TCA), coupling the hydrolysis of succinyl-CoA to the synthesis of either ATP or GTP and thus represents the only step of substrate-level phosphorylation in the TCA. The beta subunit provides nucleotide specificity of the enzyme and binds the substrate succinate, while the binding sites for coenzyme A and phosphate are found in the alpha subunit. This Desulfurococcus amylolyticus (strain DSM 18924 / JCM 16383 / VKM B-2413 / 1221n) (Desulfurococcus kamchatkensis) protein is Succinate--CoA ligase [ADP-forming] subunit beta.